A 208-amino-acid chain; its full sequence is Protein-L-isoaspartate O-methyltransferase (208 aa).

The active site involves Ser59.

The protein belongs to the methyltransferase superfamily. L-isoaspartyl/D-aspartyl protein methyltransferase family.

It localises to the cytoplasm. It catalyses the reaction [protein]-L-isoaspartate + S-adenosyl-L-methionine = [protein]-L-isoaspartate alpha-methyl ester + S-adenosyl-L-homocysteine. In terms of biological role, catalyzes the methyl esterification of L-isoaspartyl residues in peptides and proteins that result from spontaneous decomposition of normal L-aspartyl and L-asparaginyl residues. It plays a role in the repair and/or degradation of damaged proteins. This is Protein-L-isoaspartate O-methyltransferase from Yersinia enterocolitica serotype O:8 / biotype 1B (strain NCTC 13174 / 8081).